The following is a 412-amino-acid chain: Tyrosine--tRNA ligase (412 aa).

Positions 56 to 65 match the 'HIGH' region motif; sequence PSAPDVHIGH. The short motif at 240 to 244 is the 'KMSKS' region element; that stretch reads KMSKS. Residue lysine 243 coordinates ATP. The S4 RNA-binding domain maps to 351–412; it reads VWIVDLLVTL…GKRKFKKLVR (62 aa).

The protein belongs to the class-I aminoacyl-tRNA synthetase family. TyrS type 2 subfamily. As to quaternary structure, homodimer.

Its subcellular location is the cytoplasm. It carries out the reaction tRNA(Tyr) + L-tyrosine + ATP = L-tyrosyl-tRNA(Tyr) + AMP + diphosphate + H(+). Its function is as follows. Catalyzes the attachment of tyrosine to tRNA(Tyr) in a two-step reaction: tyrosine is first activated by ATP to form Tyr-AMP and then transferred to the acceptor end of tRNA(Tyr). The sequence is that of Tyrosine--tRNA ligase from Halalkalibacterium halodurans (strain ATCC BAA-125 / DSM 18197 / FERM 7344 / JCM 9153 / C-125) (Bacillus halodurans).